A 281-amino-acid polypeptide reads, in one-letter code: Putative rRNA methyltransferase YqxC (281 aa).

Residues 6-67 (ERLDVLLVER…NPLRYVSRGG (62 aa)) form the S4 RNA-binding domain.

The protein belongs to the TlyA family.

The chain is Putative rRNA methyltransferase YqxC (yqxC) from Bacillus subtilis (strain 168).